We begin with the raw amino-acid sequence, 359 residues long: Chorismate synthase (359 aa).

The NADP(+) site is built by arginine 48 and arginine 54. Residues 125 to 127 (RSS), 243 to 244 (NA), glycine 283, 298 to 302 (KPTSS), and arginine 324 contribute to the FMN site.

Belongs to the chorismate synthase family. As to quaternary structure, homotetramer. Requires FMNH2 as cofactor.

It carries out the reaction 5-O-(1-carboxyvinyl)-3-phosphoshikimate = chorismate + phosphate. The protein operates within metabolic intermediate biosynthesis; chorismate biosynthesis; chorismate from D-erythrose 4-phosphate and phosphoenolpyruvate: step 7/7. In terms of biological role, catalyzes the anti-1,4-elimination of the C-3 phosphate and the C-6 proR hydrogen from 5-enolpyruvylshikimate-3-phosphate (EPSP) to yield chorismate, which is the branch point compound that serves as the starting substrate for the three terminal pathways of aromatic amino acid biosynthesis. This reaction introduces a second double bond into the aromatic ring system. This chain is Chorismate synthase, found in Mannheimia succiniciproducens (strain KCTC 0769BP / MBEL55E).